A 189-amino-acid chain; its full sequence is ATP-dependent protease subunit HslV (189 aa).

The active site involves threonine 12. Na(+) contacts are provided by alanine 172, cysteine 175, and threonine 178.

The protein belongs to the peptidase T1B family. HslV subfamily. In terms of assembly, a double ring-shaped homohexamer of HslV is capped on each side by a ring-shaped HslU homohexamer. The assembly of the HslU/HslV complex is dependent on binding of ATP.

The protein localises to the cytoplasm. It catalyses the reaction ATP-dependent cleavage of peptide bonds with broad specificity.. Allosterically activated by HslU binding. Its function is as follows. Protease subunit of a proteasome-like degradation complex believed to be a general protein degrading machinery. This Anaplasma phagocytophilum (strain HZ) protein is ATP-dependent protease subunit HslV.